Reading from the N-terminus, the 714-residue chain is Fatty acid oxidation complex subunit alpha (714 aa).

The interval Met-1–Pro-190 is enoyl-CoA hydratase. The interval Ala-306 to Gln-714 is 3-hydroxyacyl-CoA dehydrogenase.

This sequence in the N-terminal section; belongs to the enoyl-CoA hydratase/isomerase family. It in the central section; belongs to the 3-hydroxyacyl-CoA dehydrogenase family. As to quaternary structure, heterotetramer of two alpha chains (FadJ) and two beta chains (FadI).

The protein localises to the cytoplasm. It carries out the reaction a (3S)-3-hydroxyacyl-CoA = a (2E)-enoyl-CoA + H2O. The enzyme catalyses a 4-saturated-(3S)-3-hydroxyacyl-CoA = a (3E)-enoyl-CoA + H2O. It catalyses the reaction a (3S)-3-hydroxyacyl-CoA + NAD(+) = a 3-oxoacyl-CoA + NADH + H(+). The catalysed reaction is (3S)-3-hydroxybutanoyl-CoA = (3R)-3-hydroxybutanoyl-CoA. It functions in the pathway lipid metabolism; fatty acid beta-oxidation. Functionally, catalyzes the formation of a hydroxyacyl-CoA by addition of water on enoyl-CoA. Also exhibits 3-hydroxyacyl-CoA epimerase and 3-hydroxyacyl-CoA dehydrogenase activities. This is Fatty acid oxidation complex subunit alpha from Escherichia coli O45:K1 (strain S88 / ExPEC).